A 162-amino-acid chain; its full sequence is Photosystem II extrinsic protein V (162 aa).

The first 25 residues, 1–25 (MFKKFSALFTLLFTLCLVNPMLVYS), serve as a signal peptide directing secretion. Heme c-binding residues include cysteine 62, cysteine 65, histidine 66, and histidine 117.

This sequence belongs to the cytochrome c family. PsbV subfamily. In terms of assembly, PSII is composed of 1 copy each of membrane proteins PsbA, PsbB, PsbC, PsbD, PsbE, PsbF, PsbH, PsbI, PsbJ, PsbK, PsbL, PsbM, PsbT, PsbX, PsbY, PsbZ, Psb30/Ycf12, at least 3 peripheral proteins of the oxygen-evolving complex and a large number of cofactors. It forms dimeric complexes. The cofactor is heme c.

The protein resides in the plastid. The protein localises to the chloroplast thylakoid membrane. In terms of biological role, one of the extrinsic, lumenal subunits of photosystem II (PSII). PSII is a light-driven water plastoquinone oxidoreductase, using light energy to abstract electrons from H(2)O, generating a proton gradient subsequently used for ATP formation. The extrinsic proteins stabilize the structure of photosystem II oxygen-evolving complex (OEC), the ion environment of oxygen evolution and protect the OEC against heat-induced inactivation. The chain is Photosystem II extrinsic protein V from Guillardia theta (Cryptophyte).